The primary structure comprises 1114 residues: Kinesin-like protein KIN-12B (1114 aa).

A disordered region spans residues 1–119 (MRSLFSSKLS…GGGGGDSGVQ (119 aa)). Residues 98–107 (SAASPAPEGA) show a composition bias toward low complexity. The 343-residue stretch at 117–459 (GVQVVVRVRP…LRFAHRAKDI (343 aa)) folds into the Kinesin motor domain. 197 to 204 (GQTGSGKT) lines the ATP pocket. Coiled coils occupy residues 772-810 (VLSA…KNQL) and 999-1043 (ELLV…DQEV). Polar residues predominate over residues 1055–1065 (LPSNVVQSPEP). The segment at 1055 to 1081 (LPSNVVQSPEPSETGPARYDTGGSFGD) is disordered.

It belongs to the TRAFAC class myosin-kinesin ATPase superfamily. Kinesin family. KIN-12 subfamily.

This Oryza sativa subsp. japonica (Rice) protein is Kinesin-like protein KIN-12B.